Here is a 73-residue protein sequence, read N- to C-terminus: uncharacterized protein (73 aa).

Belongs to the asfivirus DP63R family.

This is an uncharacterized protein from Ornithodoros (relapsing fever ticks).